Consider the following 312-residue polypeptide: Glycerol-3-phosphate dehydrogenase [NAD(P)+] (312 aa).

Tryptophan 11, arginine 30, arginine 31, and lysine 95 together coordinate NADPH. Sn-glycerol 3-phosphate is bound by residues lysine 95, glycine 123, and serine 125. An NADPH-binding site is contributed by alanine 127. 5 residues coordinate sn-glycerol 3-phosphate: lysine 177, aspartate 230, serine 240, arginine 241, and asparagine 242. Lysine 177 acts as the Proton acceptor in catalysis. An NADPH-binding site is contributed by arginine 241. The NADPH site is built by valine 265 and glutamate 267.

This sequence belongs to the NAD-dependent glycerol-3-phosphate dehydrogenase family.

It localises to the cytoplasm. It catalyses the reaction sn-glycerol 3-phosphate + NAD(+) = dihydroxyacetone phosphate + NADH + H(+). The catalysed reaction is sn-glycerol 3-phosphate + NADP(+) = dihydroxyacetone phosphate + NADPH + H(+). It functions in the pathway membrane lipid metabolism; glycerophospholipid metabolism. Functionally, catalyzes the reduction of the glycolytic intermediate dihydroxyacetone phosphate (DHAP) to sn-glycerol 3-phosphate (G3P), the key precursor for phospholipid synthesis. The protein is Glycerol-3-phosphate dehydrogenase [NAD(P)+] of Helicobacter pylori (strain Shi470).